The chain runs to 128 residues: Small ribosomal subunit protein uS11 (128 aa).

The protein belongs to the universal ribosomal protein uS11 family. As to quaternary structure, part of the 30S ribosomal subunit. Interacts with proteins S7 and S18. Binds to IF-3.

Located on the platform of the 30S subunit, it bridges several disparate RNA helices of the 16S rRNA. Forms part of the Shine-Dalgarno cleft in the 70S ribosome. The protein is Small ribosomal subunit protein uS11 of Acinetobacter baylyi (strain ATCC 33305 / BD413 / ADP1).